Reading from the N-terminus, the 632-residue chain is Sodium- and chloride-dependent GABA transporter 3 (632 aa).

The segment at 1–41 (MTAEKALPLGNGKAAEEARESEAPGGGCSSGGAAPARHPRV) is disordered. The Cytoplasmic portion of the chain corresponds to 1–58 (MTAEKALPLGNGKAAEEARESEAPGGGCSSGGAAPARHPRVKRDKAVHERGHWNNKVE). Ser-21 is modified (phosphoserine). Helical transmembrane passes span 59–79 (FVLS…FPYL), 87–106 (AFLI…VFFL), and 131–151 (GIGY…IIIL). Over 152–225 (AWAIFYLSNC…DGIEHIGNLR (74 aa)) the chain is Extracellular. 3 N-linked (GlcNAc...) asparagine glycosylation sites follow: Asn-187, Asn-190, and Asn-198. Transmembrane regions (helical) follow at residues 226 to 244 (WELA…FCIW), 253 to 270 (VVYV…ILLI), 306 to 323 (IFFS…LGSY), 335 to 356 (IMLC…FSVL), 389 to 408 (MPLS…FLGL), 438 to 456 (LLIL…VMLT), 473 to 493 (GMCL…VYGS), 514 to 533 (WCWM…FFLI), and 553 to 571 (IGWL…WICI). The Cytoplasmic segment spans residues 572–632 (TVWKTEGTLP…AAITEKETHF (61 aa)).

Belongs to the sodium:neurotransmitter symporter (SNF) (TC 2.A.22) family. SLC6A11 subfamily. In terms of tissue distribution, widespread distribution in the brain.

The protein resides in the cell membrane. It catalyses the reaction 4-aminobutanoate(out) + chloride(out) + 2 Na(+)(out) = 4-aminobutanoate(in) + chloride(in) + 2 Na(+)(in). It carries out the reaction taurine(out) + chloride(out) + 2 Na(+)(out) = taurine(in) + chloride(in) + 2 Na(+)(in). The enzyme catalyses beta-alanine(out) + chloride(out) + 2 Na(+)(out) = beta-alanine(in) + chloride(in) + 2 Na(+)(in). The catalysed reaction is hypotaurine(out) + chloride(out) + 2 Na(+)(out) = hypotaurine(in) + chloride(in) + 2 Na(+)(in). GABA transport is inhibited by SNAP-5114. In terms of biological role, mediates sodium- and chloride-dependent transport of gamma-aminobutyric acid (GABA). Can also mediate transport of beta-alanine and to a lower extent that of taurine and hypotaurine. The protein is Sodium- and chloride-dependent GABA transporter 3 (SLC6A11) of Homo sapiens (Human).